The following is a 186-amino-acid chain: Large ribosomal subunit protein uL5m (186 aa).

Belongs to the universal ribosomal protein uL5 family.

It localises to the mitochondrion. The sequence is that of Large ribosomal subunit protein uL5m (RPL5) from Solanum tuberosum (Potato).